The sequence spans 269 residues: Tryptophan synthase alpha chain (269 aa).

Active-site proton acceptor residues include Glu-49 and Asp-60.

This sequence belongs to the TrpA family. Tetramer of two alpha and two beta chains.

The enzyme catalyses (1S,2R)-1-C-(indol-3-yl)glycerol 3-phosphate + L-serine = D-glyceraldehyde 3-phosphate + L-tryptophan + H2O. It functions in the pathway amino-acid biosynthesis; L-tryptophan biosynthesis; L-tryptophan from chorismate: step 5/5. In terms of biological role, the alpha subunit is responsible for the aldol cleavage of indoleglycerol phosphate to indole and glyceraldehyde 3-phosphate. The chain is Tryptophan synthase alpha chain from Pseudomonas putida (strain GB-1).